The primary structure comprises 357 residues: Membrane-bound lytic murein transglycosylase C (357 aa).

A signal peptide spans methionine 1 to alanine 15. Cysteine 16 carries N-palmitoyl cysteine lipidation. Cysteine 16 carries the S-diacylglycerol cysteine lipid modification.

The protein belongs to the transglycosylase Slt family.

The protein localises to the cell outer membrane. It carries out the reaction Exolytic cleavage of the (1-&gt;4)-beta-glycosidic linkage between N-acetylmuramic acid (MurNAc) and N-acetylglucosamine (GlcNAc) residues in peptidoglycan, from either the reducing or the non-reducing ends of the peptidoglycan chains, with concomitant formation of a 1,6-anhydrobond in the MurNAc residue.. Functionally, murein-degrading enzyme. May play a role in recycling of muropeptides during cell elongation and/or cell division. The polypeptide is Membrane-bound lytic murein transglycosylase C (Haemophilus influenzae (strain ATCC 51907 / DSM 11121 / KW20 / Rd)).